Consider the following 452-residue polypeptide: MISVTLSQLTDILNGELQGADITLDAVTTDTRKLTPGCLFVALKGERFDAHDFADQAKAGGAGALLVSRPLDIDLPQLIVKDTRLAFGELAAWVRQQVPARVVALTGSSGKTSVKEMTAAILSQCGNTLYTAGNLNNDIGVPMTLLRLTPEYDYAVIELGANHQGEIAWTVSLTRPEAALVNNLAAAHLEGFGSLAGVAKAKGEIFSGLPENGIAIMNADNNDWLNWQSVIGSRKVWRFSPNAANSDFTATNIHVTSHGTEFTLQTPTGSVDVLLPLPGRHNIANALAAAALSMSVGATLDAIKAGLANLKAVPGRLFPIQLAENQLLLDDSYNANVGSMTAAVQVLAEMPGYRVLVVGDMAELGAESEACHVQVGEAAKAAGIDRVLSVGKQSHAISTASGVGEHFADKTALITRLKLLIAEQQVITILVKGSRSAAMEEVVRALQENGTC.

107–113 provides a ligand contact to ATP; the sequence is GSSGKTS.

The protein belongs to the MurCDEF family. MurF subfamily. In terms of assembly, monomer.

The protein resides in the cytoplasm. The enzyme catalyses D-alanyl-D-alanine + UDP-N-acetyl-alpha-D-muramoyl-L-alanyl-gamma-D-glutamyl-meso-2,6-diaminopimelate + ATP = UDP-N-acetyl-alpha-D-muramoyl-L-alanyl-gamma-D-glutamyl-meso-2,6-diaminopimeloyl-D-alanyl-D-alanine + ADP + phosphate + H(+). Its pathway is cell wall biogenesis; peptidoglycan biosynthesis. Involved in cell wall formation. Catalyzes the final step in the synthesis of UDP-N-acetylmuramoyl-pentapeptide, the precursor of murein. The protein is UDP-N-acetylmuramoyl-tripeptide--D-alanyl-D-alanine ligase of Escherichia coli (strain K12).